Here is a 200-residue protein sequence, read N- to C-terminus: Phospholipase A2 inhibitor CNF (200 aa).

Residues 1-19 form the signal peptide; the sequence is MKYLHTICLLFIFVARGNS. Intrachain disulfides connect cysteine 22/cysteine 46, cysteine 25/cysteine 32, cysteine 39/cysteine 67, cysteine 73/cysteine 94, cysteine 95/cysteine 100, cysteine 118/cysteine 143, cysteine 136/cysteine 165, and cysteine 169/cysteine 191. Asparagine 176 is a glycosylation site (N-linked (GlcNAc...) asparagine; partial).

Occurs as a mixture of oligomers. Tetrameric arrangement appears to be the predominant quaternary structure. Interacts with phospholipase A2 crotoxin basic subunit CBd; the interaction leads to dissociation of the CA-CB heterodimer and to inhibition of PLA2 activity of the CB subunit. Post-translationally, the carbohydrate moiety increases the inhibition capacity of CNF, but is not essential for activity and for oligomerization. As to expression, expressed by the liver.

It localises to the secreted. In terms of biological role, inhibits the PLA2 activity of crotoxin (CTX) by replacing the acid subunit (CA) in the CTX complex. Displays a pro-inflammatory action through activation of important main signaling pathways for human leukocytes, in vitro. Abolishes both the muscle-paralyzing and muscle-damaging activities of CTX in mice phrenic nerve-diaphragm muscle preparations. The protein is Phospholipase A2 inhibitor CNF of Crotalus durissus terrificus (South American rattlesnake).